A 1058-amino-acid chain; its full sequence is Gem-associated protein 4 (1058 aa).

Met-1 carries the N-acetylmethionine modification. Thr-84 carries the phosphothreonine modification. Phosphoserine occurs at positions 86 and 205. The tract at residues 714-735 (LPKEKRCLSLDRKDLAIHILEL) is leucine-zipper.

Part of the core SMN complex that contains SMN1, GEMIN2/SIP1, DDX20/GEMIN3, GEMIN4, GEMIN5, GEMIN6, GEMIN7, GEMIN8 and STRAP/UNRIP. Part of the SMN-Sm complex that contains SMN1, GEMIN2/SIP1, DDX20/GEMIN3, GEMIN4, GEMIN5, GEMIN6, GEMIN7, GEMIN8, STRAP/UNRIP and the Sm proteins SNRPB, SNRPD1, SNRPD2, SNRPD3, SNRPE, SNRPF and SNRPG. Interacts with GEMIN3; the interaction is direct. Interacts with GEMIN5. Interacts with GEMIN8; the interaction is direct. Interacts with several snRNP SM core proteins, including SNRPB, SNRPD1, SNRPD2, SNRPD3 and SNRPE. Interacts with PPP4R2.

The protein resides in the cytoplasm. Its subcellular location is the nucleus. It is found in the nucleolus. It localises to the gem. Functionally, the SMN complex catalyzes the assembly of small nuclear ribonucleoproteins (snRNPs), the building blocks of the spliceosome, and thereby plays an important role in the splicing of cellular pre-mRNAs. Most spliceosomal snRNPs contain a common set of Sm proteins SNRPB, SNRPD1, SNRPD2, SNRPD3, SNRPE, SNRPF and SNRPG that assemble in a heptameric protein ring on the Sm site of the small nuclear RNA to form the core snRNP (Sm core). In the cytosol, the Sm proteins SNRPD1, SNRPD2, SNRPE, SNRPF and SNRPG are trapped in an inactive 6S pICln-Sm complex by the chaperone CLNS1A that controls the assembly of the core snRNP. To assemble core snRNPs, the SMN complex accepts the trapped 5Sm proteins from CLNS1A forming an intermediate. Binding of snRNA inside 5Sm triggers eviction of the SMN complex, thereby allowing binding of SNRPD3 and SNRPB to complete assembly of the core snRNP. The polypeptide is Gem-associated protein 4 (GEMIN4) (Homo sapiens (Human)).